A 327-amino-acid polypeptide reads, in one-letter code: Thiamine thiazole synthase (327 aa).

Residues C86, 107–108 (EA), G115, and V182 each bind substrate. C216 is modified (2,3-didehydroalanine (Cys)). Residues D218, H233, M285, and 295-297 (RMG) each bind substrate.

The protein belongs to the THI4 family. Homooctamer. Requires Fe cation as cofactor. In terms of processing, during the catalytic reaction, a sulfide is transferred from Cys-216 to a reaction intermediate, generating a dehydroalanine residue.

The protein localises to the cytoplasm. It is found in the nucleus. It catalyses the reaction [ADP-thiazole synthase]-L-cysteine + glycine + NAD(+) = [ADP-thiazole synthase]-dehydroalanine + ADP-5-ethyl-4-methylthiazole-2-carboxylate + nicotinamide + 3 H2O + 2 H(+). Involved in biosynthesis of the thiamine precursor thiazole. Catalyzes the conversion of NAD and glycine to adenosine diphosphate 5-(2-hydroxyethyl)-4-methylthiazole-2-carboxylic acid (ADT), an adenylated thiazole intermediate. The reaction includes an iron-dependent sulfide transfer from a conserved cysteine residue of the protein to a thiazole intermediate. The enzyme can only undergo a single turnover, which suggests it is a suicide enzyme. May have additional roles in adaptation to various stress conditions and in DNA damage tolerance. The polypeptide is Thiamine thiazole synthase (Aspergillus oryzae (strain ATCC 42149 / RIB 40) (Yellow koji mold)).